A 190-amino-acid chain; its full sequence is Inosine triphosphate pyrophosphatase (190 aa).

An ITP-binding site is contributed by 8–13 (TGNANK). E37 contributes to the Mg(2+) binding site. ITP is bound by residues K49, 65-66 (DT), K82, 140-143 (FGWD), K163, and 168-169 (HR).

Belongs to the HAM1 NTPase family. As to quaternary structure, homodimer. It depends on Mg(2+) as a cofactor. Mn(2+) is required as a cofactor.

It localises to the cytoplasm. Its subcellular location is the nucleus. The catalysed reaction is ITP + H2O = IMP + diphosphate + H(+). It carries out the reaction dITP + H2O = dIMP + diphosphate + H(+). The enzyme catalyses XTP + H2O = XMP + diphosphate + H(+). Pyrophosphatase that hydrolyzes non-canonical purine nucleotides such as inosine triphosphate (ITP), deoxyinosine triphosphate (dITP) or xanthosine 5'-triphosphate (XTP) to their respective monophosphate derivatives. The enzyme does not distinguish between the deoxy- and ribose forms. Probably excludes non-canonical purines from RNA and DNA precursor pools, thus preventing their incorporation into RNA and DNA and avoiding chromosomal lesions. This is Inosine triphosphate pyrophosphatase from Batrachochytrium dendrobatidis (strain JAM81 / FGSC 10211) (Frog chytrid fungus).